The primary structure comprises 131 residues: Small ribosomal subunit protein bS6 (131 aa).

The disordered stretch occupies residues 96 to 131; it reads VTEASPMAKAKDERDSRRGPAGDRSYDEANAEEIAE. The segment covering 104 to 122 has biased composition (basic and acidic residues); the sequence is KAKDERDSRRGPAGDRSYD.

Belongs to the bacterial ribosomal protein bS6 family.

Its function is as follows. Binds together with bS18 to 16S ribosomal RNA. The polypeptide is Small ribosomal subunit protein bS6 (Shewanella sp. (strain MR-4)).